A 296-amino-acid chain; its full sequence is Cytochrome bc1 complex cytochrome c subunit (296 aa).

The segment covering 1 to 19 (MMETNPQTSEGAGKAQSSA) has biased composition (polar residues). A disordered region spans residues 1-27 (MMETNPQTSEGAGKAQSSAKKVKNRRK). Residues 32 to 52 (VAGAMALTIGLSGAGILATAI) form a helical membrane-spanning segment. 2 consecutive Cytochrome c domains span residues 67–147 (ALIA…AANG) and 177–255 (LDVS…KSTK). Positions 80, 83, 84, 190, 193, and 194 each coordinate heme c. A helical transmembrane segment spans residues 274–294 (GLFMWGIGIMVLIAAAMWIGS).

In terms of assembly, the cytochrome bc1 complex is composed of a cytochrome b (QcrB), the Rieske iron-sulfur protein (QcrA) and a diheme cytochrome c (QcrC) subunit. The bc1 complex forms a supercomplex with cytochrome c oxidase (cytochrome aa3). In terms of processing, binds 2 heme c groups covalently per subunit.

Its subcellular location is the cell membrane. The catalysed reaction is a quinol + 2 Fe(III)-[cytochrome c](out) = a quinone + 2 Fe(II)-[cytochrome c](out) + 2 H(+)(out). In terms of biological role, cytochrome c1 subunit of the cytochrome bc1 complex, an essential component of the respiratory electron transport chain required for ATP synthesis. The bc1 complex catalyzes the oxidation of menaquinol and the reduction of cytochrome c in the respiratory chain. The bc1 complex operates through a Q-cycle mechanism that couples electron transfer to generation of the proton gradient that drives ATP synthesis. The protein is Cytochrome bc1 complex cytochrome c subunit (qcrC) of Corynebacterium efficiens (strain DSM 44549 / YS-314 / AJ 12310 / JCM 11189 / NBRC 100395).